The sequence spans 478 residues: Transposase for insertion sequence element IS231B (478 aa).

The protein belongs to the transposase 11 family.

Involved in the transposition of the insertion sequence. The polypeptide is Transposase for insertion sequence element IS231B (Bacillus thuringiensis subsp. berliner).